Reading from the N-terminus, the 163-residue chain is Large ribosomal subunit protein uL11 (163 aa).

Positions 1–25 are disordered; the sequence is MAGTIEVLVAGGQADPGPPLGPELG.

This sequence belongs to the universal ribosomal protein uL11 family. Part of the ribosomal stalk of the 50S ribosomal subunit. Interacts with L10 and the large rRNA to form the base of the stalk. L10 forms an elongated spine to which L12 dimers bind in a sequential fashion forming a multimeric L10(L12)X complex.

Forms part of the ribosomal stalk which helps the ribosome interact with GTP-bound translation factors. This chain is Large ribosomal subunit protein uL11, found in Natronomonas pharaonis (strain ATCC 35678 / DSM 2160 / CIP 103997 / JCM 8858 / NBRC 14720 / NCIMB 2260 / Gabara) (Halobacterium pharaonis).